The primary structure comprises 115 residues: Promotilin (115 aa).

The N-terminal stretch at 1–25 (MLSRKATAVLLAVHAAAMLASQTEA) is a signal peptide. The tract at residues 43–72 (RYKGQKKSLSVQQRSEEVGPVDPTEPWEEK) is disordered.

It belongs to the motilin family.

Its subcellular location is the secreted. Its function is as follows. Plays an important role in the regulation of interdigestive gastrointestinal motility and indirectly causes rhythmic contraction of duodenal and colonic smooth muscle. This Bos taurus (Bovine) protein is Promotilin (MLN).